The chain runs to 884 residues: Valine--tRNA ligase (884 aa).

Residues 43-53 (PNVTGSLHIGH) carry the 'HIGH' region motif. The short motif at 530–534 (KMSKS) is the 'KMSKS' region element. K533 contacts ATP. A coiled-coil region spans residues 817–884 (VIDLDAERGR…KLKAALERLM (68 aa)).

Belongs to the class-I aminoacyl-tRNA synthetase family. ValS type 1 subfamily. As to quaternary structure, monomer.

It localises to the cytoplasm. The enzyme catalyses tRNA(Val) + L-valine + ATP = L-valyl-tRNA(Val) + AMP + diphosphate. In terms of biological role, catalyzes the attachment of valine to tRNA(Val). As ValRS can inadvertently accommodate and process structurally similar amino acids such as threonine, to avoid such errors, it has a 'posttransfer' editing activity that hydrolyzes mischarged Thr-tRNA(Val) in a tRNA-dependent manner. This is Valine--tRNA ligase from Zymomonas mobilis subsp. mobilis (strain ATCC 31821 / ZM4 / CP4).